A 410-amino-acid chain; its full sequence is Peptidase T (410 aa).

Residue His79 participates in Zn(2+) binding. Asp81 is an active-site residue. Asp142 serves as a coordination point for Zn(2+). Glu176 functions as the Proton acceptor in the catalytic mechanism. Zn(2+) contacts are provided by Glu177, Asp199, and His381.

It belongs to the peptidase M20B family. Zn(2+) serves as cofactor.

It is found in the cytoplasm. The enzyme catalyses Release of the N-terminal residue from a tripeptide.. Its function is as follows. Cleaves the N-terminal amino acid of tripeptides. This chain is Peptidase T, found in Bacillus cereus (strain B4264).